The sequence spans 290 residues: MSLFDWFAARRKDQFVGKVIQEAEEADGLWGKCPECSQVVYRKDLLENANVCSNCGHHNRINSDERIKLIADQNSFKSTDKHLSPVDPLGFKDRRAYADRLRESQSSTGMKDGVTTGVCQVEQIPLALAVMDFRFMGGSMGSVVGEKITRLIEKATNQKLPLLIVCASGGARMQEGMLSLMQMAKISGALERHREAELLYMPLLTHPTTGGVTASFAMLGDLILAEPKALIGFAGRRVIEQTLREKLPDNFQTAEYLLDHGFVDKIIPRTQLKKTLGVLLRLHGYREKRK.

Residues 29–290 (LWGKCPECSQ…RLHGYREKRK (262 aa)) enclose the CoA carboxyltransferase N-terminal domain. Zn(2+) is bound by residues C33, C36, C52, and C55. The C4-type zinc finger occupies 33–55 (CPECSQVVYRKDLLENANVCSNC).

The protein belongs to the AccD/PCCB family. In terms of assembly, acetyl-CoA carboxylase is a heterohexamer composed of biotin carboxyl carrier protein (AccB), biotin carboxylase (AccC) and two subunits each of ACCase subunit alpha (AccA) and ACCase subunit beta (AccD). Requires Zn(2+) as cofactor.

Its subcellular location is the cytoplasm. It catalyses the reaction N(6)-carboxybiotinyl-L-lysyl-[protein] + acetyl-CoA = N(6)-biotinyl-L-lysyl-[protein] + malonyl-CoA. Its pathway is lipid metabolism; malonyl-CoA biosynthesis; malonyl-CoA from acetyl-CoA: step 1/1. Functionally, component of the acetyl coenzyme A carboxylase (ACC) complex. Biotin carboxylase (BC) catalyzes the carboxylation of biotin on its carrier protein (BCCP) and then the CO(2) group is transferred by the transcarboxylase to acetyl-CoA to form malonyl-CoA. The sequence is that of Acetyl-coenzyme A carboxylase carboxyl transferase subunit beta from Prochlorococcus marinus (strain MIT 9211).